The sequence spans 52 residues: Venom peptide 4b (52 aa).

The N-terminal stretch at 1–23 (MRSAILLVIVAIVAILGFLGVNA) is a signal peptide. AXPX repeat units follow at residues 23–26 (AEPL), 31–34 (AEPN), and 39–42 (AAPL). Positions 24-41 (EPLPSPLAEPNPHAKAAP) are excised as a propeptide. The disordered stretch occupies residues 30–52 (LAEPNPHAKAAPLSPAAMASLAG). The segment covering 37–52 (AKAAPLSPAAMASLAG) has biased composition (low complexity). The residue at position 51 (Ala51) is an Alanine amide.

In terms of tissue distribution, expressed by the venom gland.

The protein resides in the secreted. This is Venom peptide 4b from Eumenes pomiformis (Potter wasp).